A 351-amino-acid polypeptide reads, in one-letter code: Beta-hexosaminidase (351 aa).

Substrate contacts are provided by residues Asp-62, Arg-70, Arg-134, and 164–165; that span reads KH. His-177 acts as the Proton donor/acceptor in catalysis. Asp-249 (nucleophile) is an active-site residue.

It belongs to the glycosyl hydrolase 3 family. NagZ subfamily. Monomer.

It localises to the cytoplasm. The catalysed reaction is Hydrolysis of terminal non-reducing N-acetyl-D-hexosamine residues in N-acetyl-beta-D-hexosaminides.. It functions in the pathway cell wall biogenesis; peptidoglycan recycling. In terms of biological role, plays a role in peptidoglycan recycling by cleaving the terminal beta-1,4-linked N-acetylglucosamine (GlcNAc) from peptide-linked peptidoglycan fragments, giving rise to free GlcNAc, anhydro-N-acetylmuramic acid and anhydro-N-acetylmuramic acid-linked peptides. The chain is Beta-hexosaminidase from Pasteurella multocida (strain Pm70).